Here is a 126-residue protein sequence, read N- to C-terminus: Putative lipoprotein LprD (126 aa).

Positions 1–19 (MSTTRRRRPALVALVTIAA) are cleaved as a signal peptide. The N-palmitoyl cysteine moiety is linked to residue cysteine 20. Cysteine 20 carries S-diacylglycerol cysteine lipidation. A helical membrane pass occupies residues 44-64 (GYALQWPLFAGFCLYTYHNFV).

To M.tuberculosis Rv1343c.

Its subcellular location is the cell membrane. The sequence is that of Putative lipoprotein LprD (lprD) from Mycobacterium leprae (strain TN).